Reading from the N-terminus, the 191-residue chain is MKKQLFSALIGASLFAPMAVSAADYVIDTEGAHASITFKVNHLGYSYVVGRFNDFSGDFSFDAAKPTAMKVNVTVNTVSVDSNHAERDKHIRGEDFLNTGKFAKATFASTSVEDKGNGDLVINGNLTLNGVTKPLAIQAHAVGEGQDPWGGYRAGFTGKTTFAMKDFGIKIDLGPTSSHVELDLVVEGVRK.

A signal peptide spans 1–22 (MKKQLFSALIGASLFAPMAVSA).

It belongs to the UPF0312 family. Type 1 subfamily.

It localises to the periplasm. The protein is UPF0312 protein SO_3370 of Shewanella oneidensis (strain ATCC 700550 / JCM 31522 / CIP 106686 / LMG 19005 / NCIMB 14063 / MR-1).